A 1401-amino-acid chain; its full sequence is MTGSLLASKRIRKEFGSKSRVVDIPDLIGMQRTSFERFLQRNVPPEEREDIGIHLVFKSVLPIKDFTGTSSLEYVSYSFGETKHSMKECISRGMTYEIPVNITVRLVVYDVDKDAGVTSIRDIKEQEIYFGTIPLMTKRGTFIINGTERAVVSQLHRSSGVFFDHDKGKSHSSGKIIYTARIIPVRGSWIDMEIDPKDIVNIRIDRRRKFPVTILFKAFGYTNEDILSFFYKKEQIVKKDGILFKEFNPDNLKRNRASFDILDPETGEAVVKKGRLFTLRALKQLQVAGLKSIPISEEDIIGRGFATSVVHPETEEILAKAGSLIDPEVLEKIADAGITEFSILYVDTYSSDSMRKTLAVDKVTSRAEALIEIYRRLRPGNPATPEVAQDFIDHLFFKPAYYDLSNVGRLKMNHRLGMSTGIDVRTLRREDILLTAATLVELKDTQGAVDDIDHLGNRRVRAVGELLENQYRIGLVRMERAIKERMSMQEVDAMMPHDLVNPKPVSAVVREFFGTSQLSQFMDQTNPLSETTHKRRLSALGPGGLTRERAGFEVRDVHPSHYGRICPIETPEGPNIGLIVSLCTYARVNDFGFIETPYRIAKDGVVSKQITHLSAFEEKEHPIAQANAVLDDQGHLMNDLVTSRVGGEFEMVAKNDIEFMDVSPNQLVSVSASLIPFLENDDANRALMGSNMQRQAVPLIRSEAPLVGTGIEGVVARDSGVAIVAEHDGIVVDVDAKRIVVKNTENGKGSDDRTVTIYTASKFVRSNQNTCFNHRPIVKKGDAVRKGEVIADGPSTEMGELALGKNVTVAFMPWGGYNYEDSILVSERLVKEGVYTSVHVEEFEVVARDTKLGKEEITRDIPNAGEEALKDLDDSGIIRLGAEVKPGDILVGKITPKGETQLSPEEKLLRAIFGEKAGDVKDTSLRVPPGVEGVVTAAKVFSRRGLPKDDRTRLIEDLEIEKLEKDRDDEVRIITETIQERLEDILAGQALQAVVKKGKKVVVPAGTLVTRGLFEGISLTDLMGLTVEDSSLTEMAHVILEKAETQIKKARENFNNQASRYEKGDDLPPGVLKLIKINVAMKRVLSVGDKMAGRHGNKGVVSRILPVADLPYFEDGRTVDMVLNPLGVPSRMNVGQILEIHLGCAARGLGRQIDDLIYEKKTDELRARIKRIFTTPLIKTGERANKDKTHYDFSSHYTVEKSMAKRTNEEEIQFVDTIDHMDDTEFLEFASMYKNGVHMATPVFDGAAESEIKSLISYAGLDPSGQSTLYDGRTGEPFDKPITVGIMYMLKLHHLVDDKIHARSIGPYSLVTQQPLGGKAQFGGQRLGEMEVWAMEAYGAAHALQEFITVKSDDMTGRTRMYEKIVKGQNVLEPGMPESFRVLTKELQSLGLDINLLEGKK.

The protein belongs to the RNA polymerase beta chain family. In terms of assembly, the RNAP catalytic core consists of 2 alpha, 1 beta, 1 beta' and 1 omega subunit. When a sigma factor is associated with the core the holoenzyme is formed, which can initiate transcription.

It carries out the reaction RNA(n) + a ribonucleoside 5'-triphosphate = RNA(n+1) + diphosphate. In terms of biological role, DNA-dependent RNA polymerase catalyzes the transcription of DNA into RNA using the four ribonucleoside triphosphates as substrates. In Desulforapulum autotrophicum (strain ATCC 43914 / DSM 3382 / VKM B-1955 / HRM2) (Desulfobacterium autotrophicum), this protein is DNA-directed RNA polymerase subunit beta.